Reading from the N-terminus, the 427-residue chain is Probable transcription factor At5g28040 (427 aa).

The interval 1-81 (MASDQRDTDF…APATKSSSGT (81 aa)) is disordered. Phosphoserine is present on serine 14. The span at 22-32 (GGGGGGRGGGE) shows a compositional bias: gly residues. The span at 33–62 (TESDEDVVIPEPNEAEDDDHDPDPDPEYED) shows a compositional bias: acidic residues.

This sequence belongs to the GeBP family.

The protein is Probable transcription factor At5g28040 of Arabidopsis thaliana (Mouse-ear cress).